Here is a 446-residue protein sequence, read N- to C-terminus: MTKTAAVILAAGQGTRMKSALPKVLHPLAGRPMVAHLIHALGAVAPSRTVVVIGPGMESVADRVAPLPTVLQAERLGTAHAVAQAGEALAGFDGTVLILYGDTPLITPETLTRMVEARLAAEDPAVVVLGFRPADPLQYGRLITSPAGLEAIVEYKDATAEQRAIGLCNSGVMAVDGRVLFALLAAVGNDNAKGEYYLTDIVALARGMGRACAVVEGAAEELLGVNSRSELAAAEAVIQGRLREKAMEGGATLTAPETVFFSADTRLGRDVSIGPFVTFGPGVEIGDGVEIKGFCHIEGARVAAKATLGPYARLRPGATIAEGAHVGNFVEIKNSAVEQGAKVNHLTYIGDARVGARANIGAGTITCNYDGFGKYHTDIGEGAFIGSNTALVAPVSIGAGAIIGAGSTIARDVEADALALTRGPHEVRPGWAAKFRAHMRRLTGKN.

The segment at 1–228 (MTKTAAVILA…AEELLGVNSR (228 aa)) is pyrophosphorylase. UDP-N-acetyl-alpha-D-glucosamine is bound by residues 9–12 (LAAG), K23, Q72, 77–78 (GT), 100–102 (YGD), G140, E154, N169, and N226. D102 is a Mg(2+) binding site. N226 provides a ligand contact to Mg(2+). The tract at residues 229-249 (SELAAAEAVIQGRLREKAMEG) is linker. An N-acetyltransferase region spans residues 250 to 446 (GATLTAPETV…AHMRRLTGKN (197 aa)). 2 residues coordinate UDP-N-acetyl-alpha-D-glucosamine: R315 and K333. H345 acts as the Proton acceptor in catalysis. 2 residues coordinate UDP-N-acetyl-alpha-D-glucosamine: Y348 and N359. Residues A362, 368–369 (NY), S387, A405, and R422 each bind acetyl-CoA.

It in the N-terminal section; belongs to the N-acetylglucosamine-1-phosphate uridyltransferase family. In the C-terminal section; belongs to the transferase hexapeptide repeat family. As to quaternary structure, homotrimer. It depends on Mg(2+) as a cofactor.

The protein resides in the cytoplasm. The enzyme catalyses alpha-D-glucosamine 1-phosphate + acetyl-CoA = N-acetyl-alpha-D-glucosamine 1-phosphate + CoA + H(+). It catalyses the reaction N-acetyl-alpha-D-glucosamine 1-phosphate + UTP + H(+) = UDP-N-acetyl-alpha-D-glucosamine + diphosphate. The protein operates within nucleotide-sugar biosynthesis; UDP-N-acetyl-alpha-D-glucosamine biosynthesis; N-acetyl-alpha-D-glucosamine 1-phosphate from alpha-D-glucosamine 6-phosphate (route II): step 2/2. It participates in nucleotide-sugar biosynthesis; UDP-N-acetyl-alpha-D-glucosamine biosynthesis; UDP-N-acetyl-alpha-D-glucosamine from N-acetyl-alpha-D-glucosamine 1-phosphate: step 1/1. It functions in the pathway bacterial outer membrane biogenesis; LPS lipid A biosynthesis. Its function is as follows. Catalyzes the last two sequential reactions in the de novo biosynthetic pathway for UDP-N-acetylglucosamine (UDP-GlcNAc). The C-terminal domain catalyzes the transfer of acetyl group from acetyl coenzyme A to glucosamine-1-phosphate (GlcN-1-P) to produce N-acetylglucosamine-1-phosphate (GlcNAc-1-P), which is converted into UDP-GlcNAc by the transfer of uridine 5-monophosphate (from uridine 5-triphosphate), a reaction catalyzed by the N-terminal domain. The sequence is that of Bifunctional protein GlmU from Rhodospirillum rubrum (strain ATCC 11170 / ATH 1.1.1 / DSM 467 / LMG 4362 / NCIMB 8255 / S1).